A 34-amino-acid chain; its full sequence is Photosystem II reaction center protein Psb30 (34 aa).

The chain crosses the membrane as a helical span at residues 7 to 27; sequence VAQLLALFVIITSGPAIIILI.

This sequence belongs to the Psb30/Ycf12 family. As to quaternary structure, PSII is composed of 1 copy each of membrane proteins PsbA, PsbB, PsbC, PsbD, PsbE, PsbF, PsbH, PsbI, PsbJ, PsbK, PsbL, PsbM, PsbT, PsbX, PsbY, PsbZ, Psb30/Ycf12, peripheral proteins of the oxygen-evolving complex and a large number of cofactors. It forms dimeric complexes.

It localises to the plastid. It is found in the chloroplast thylakoid membrane. A core subunit of photosystem II (PSII), probably helps stabilize the reaction center. The sequence is that of Photosystem II reaction center protein Psb30 from Guillardia theta (Cryptophyte).